A 428-amino-acid chain; its full sequence is Aspartic protease 10 (428 aa).

A signal peptide spans 1–16; the sequence is MKTFIALLALLTVVSA. The Peptidase A1 domain maps to 72–425; sequence YMVQISLGSP…DMKSGRLGLA (354 aa). Residue Asp90 is part of the active site. Residues Asn155 and Asn191 are each glycosylated (N-linked (GlcNAc...) asparagine). Residue Asp318 is part of the active site. A disulfide bond links Cys353 and Cys385.

This sequence belongs to the peptidase A1 family. Proteolytically cleaved. As to expression, synthesized in the intestine. When secreted in low heme conditions, localizes to neurons near the anterior and posterior regions of the body and in coelomocytes.

Its subcellular location is the secreted. Functionally, aspartic protease which plays a role in heme homeostasis and mediates inter-organ signaling between the intestine and extra-intestinal tissues when cellular heme levels are low. The polypeptide is Aspartic protease 10 (Caenorhabditis elegans).